The following is a 273-amino-acid chain: Large ribosomal subunit protein uL2 (273 aa).

Residues arginine 221–lysine 273 form a disordered region.

It belongs to the universal ribosomal protein uL2 family. Part of the 50S ribosomal subunit. Forms a bridge to the 30S subunit in the 70S ribosome.

Its function is as follows. One of the primary rRNA binding proteins. Required for association of the 30S and 50S subunits to form the 70S ribosome, for tRNA binding and peptide bond formation. It has been suggested to have peptidyltransferase activity; this is somewhat controversial. Makes several contacts with the 16S rRNA in the 70S ribosome. The sequence is that of Large ribosomal subunit protein uL2 from Sodalis glossinidius (strain morsitans).